A 197-amino-acid chain; its full sequence is uncharacterized protein (197 aa).

Positions 1–10 (MKNNYTSLKS) are enriched in polar residues. Disordered stretches follow at residues 1–46 (MKNN…PPYS) and 54–73 (LVPE…NVER). Residues 18–37 (LKTGHEIDLEKGPLPEHNSE) show a composition bias toward basic and acidic residues. Positions 58–69 (DSSTGPTETANP) are enriched in polar residues. Transmembrane regions (helical) follow at residues 83–105 (NIYS…FTAW) and 120–142 (AFFV…EPGL).

This sequence belongs to the WTF family.

Its subcellular location is the endoplasmic reticulum membrane. This is an uncharacterized protein from Schizosaccharomyces pombe (strain 972 / ATCC 24843) (Fission yeast).